We begin with the raw amino-acid sequence, 554 residues long: Hedycaryol synthase (554 aa).

(2E,6E)-farnesyl diphosphate-binding residues include Arg270, Asp307, Asp311, Arg449, and Asp452. Mg(2+)-binding residues include Asp307 and Asp311. The DDXXD motif signature appears at 307–311 (DDTYD). 3 residues coordinate Mg(2+): Asp452, Ser456, and Glu460.

Belongs to the terpene synthase family. Requires Mg(2+) as cofactor. As to expression, specifically expressed in flowers.

The catalysed reaction is (2E,6E)-farnesyl diphosphate + H2O = (2E,6E)-hedycaryol + diphosphate. Its pathway is secondary metabolite biosynthesis; terpenoid biosynthesis. Functionally, sesquiterpene synthase that catalyzes the formation of sesquiterpenes and sesquiterpenoid alcohols. Converts farnesyl diphosphate (FPP) to hedycaryol. Hedycaryol is likely to be one of the terpenes that attract insects for pollination of Camellia brevistyla. In Camellia brevistyla, this protein is Hedycaryol synthase.